Here is a 377-residue protein sequence, read N- to C-terminus: DnaJ-related protein SCJ1 (377 aa).

Residues 1–21 form the signal peptide; sequence MIPKLYIHLILSLLLLPLILA. In terms of domain architecture, J spans 23–88; that stretch reads DYYAILEIDK…EKKKIYDQFG (66 aa). Residues 156 to 237 form a CR-type zinc finger; that stretch reads GSSIEFTLNL…CHGKKVTKKN (82 aa). 4 CXXCXGXG motif repeats span residues 169 to 176, 185 to 192, 211 to 218, and 225 to 232; these read CDACHGSG, CPDCQGRG, CGRCGGTG, and CKTCHGKK. The short motif at 288–290 is the Cell attachment site element; it reads RGD. The Prevents secretion from ER signature appears at 374–377; the sequence is KDEL.

The protein localises to the endoplasmic reticulum lumen. Regulates protein folding in the endoplasmic reticulum lumen. Probably acts as a J-protein for the Hsp70-type chaperone KAR2 by stimulating its ATP-dependent reaction cycle and initiating folding reactions. Also involved in the endoplasmic reticulum-associated degradation (ERAD) process. Cooperates with KAR2 and another J-protein JEM1 to facilitate the export of ERAD substrates to the cytoplasm by maintaining them in a translocation-competent state and preventing their aggregation in the endoplasmic reticulum lumen. The sequence is that of DnaJ-related protein SCJ1 (SCJ1) from Saccharomyces cerevisiae (strain ATCC 204508 / S288c) (Baker's yeast).